The chain runs to 131 residues: Small ribosomal subunit protein bS6 (131 aa).

The segment at Val96–Ala131 is disordered. Residues Met103–Ala117 show a composition bias toward basic and acidic residues. The segment covering Ala118–Ala131 has biased composition (low complexity).

Belongs to the bacterial ribosomal protein bS6 family.

Its function is as follows. Binds together with bS18 to 16S ribosomal RNA. The sequence is that of Small ribosomal subunit protein bS6 from Methylobacillus flagellatus (strain ATCC 51484 / DSM 6875 / VKM B-1610 / KT).